Reading from the N-terminus, the 1091-residue chain is ATP-dependent helicase/deoxyribonuclease subunit B (1091 aa).

The protein belongs to the helicase family. AddB/RexB type 2 subfamily. Heterodimer of AddA and RexB. The cofactor is Mg(2+).

Its function is as follows. The heterodimer acts as both an ATP-dependent DNA helicase and an ATP-dependent, dual-direction single-stranded exonuclease. Recognizes the chi site generating a DNA molecule suitable for the initiation of homologous recombination. This subunit has 5' -&gt; 3' nuclease activity but not helicase activity. The protein is ATP-dependent helicase/deoxyribonuclease subunit B of Streptococcus pneumoniae serotype 19F (strain G54).